Reading from the N-terminus, the 255-residue chain is MRILKKKMKLKGKVKKYLIDKLNDNEKLHFSLIDPFKINSSDELKYITKNLYNAGTDAFLIGGTLGVSKDKLDFVISLLDDYEIPKIIFPSNINLLSEKADALLFMSLLNSDDIYYIIGAQIVAAPIIKMLQMEVIPTAYVIVGHGGTAAHIGKARVIPYDNFELATAYTLAAEYLGMSFVYLEAGSGAPEPIRPEMISFIKNASSIPLIVGGGIRSVEVALKLVEAGADIIVTGNIIESDVNKAIKIIRGIKNK.

The Mg(2+) site is built by Asp-34 and Thr-64. Sn-glycerol 1-phosphate is bound by residues 182–188 (YLEAGSG), 213–214 (GG), and 235–236 (GN).

The protein belongs to the GGGP/HepGP synthase family. Group II subfamily. The cofactor is Mg(2+).

It localises to the cytoplasm. The enzyme catalyses sn-glycerol 1-phosphate + (2E,6E,10E)-geranylgeranyl diphosphate = sn-3-O-(geranylgeranyl)glycerol 1-phosphate + diphosphate. It functions in the pathway membrane lipid metabolism; glycerophospholipid metabolism. Prenyltransferase that catalyzes the transfer of the geranylgeranyl moiety of geranylgeranyl diphosphate (GGPP) to the C3 hydroxyl of sn-glycerol-1-phosphate (G1P). This reaction is the first ether-bond-formation step in the biosynthesis of archaeal membrane lipids. This is Geranylgeranylglyceryl phosphate synthase from Saccharolobus solfataricus (strain ATCC 35092 / DSM 1617 / JCM 11322 / P2) (Sulfolobus solfataricus).